Consider the following 146-residue polypeptide: MQGLSFTSTAATFFLVLCLQLGINEGQDNETIPQPLLFQLNVPSTPDENQEVDMSLTLQTQYKECLVVKAYLISNTPVDGGFNYIQTRCICNDHPTTLYWTFVVTQTLTFRIMVDIVKDKGICPNNVAVVPISGNRYFTDRTVYVN.

Positions 1 to 26 are cleaved as a signal peptide; the sequence is MQGLSFTSTAATFFLVLCLQLGINEG. At glutamine 27 the chain carries Pyrrolidone carboxylic acid. Asparagine 29 carries an N-linked (GlcNAc...) asparagine glycan. 2 cysteine pairs are disulfide-bonded: cysteine 65–cysteine 91 and cysteine 89–cysteine 123.

This sequence belongs to the PIP family. Monomer. Interacts with AZGP1.

The protein localises to the secreted. The protein is Prolactin-inducible protein homolog (Pip) of Rattus norvegicus (Rat).